The following is a 391-amino-acid chain: Succinate--CoA ligase [GDP-forming] subunit beta, mitochondrial (391 aa).

Residues 5-233 (KKIMADHGVT…NAEFRQKEIF (229 aa)) form the ATP-grasp domain. Residues Gln-16, 49–51 (GRG), and Leu-105 contribute to the GTP site. Mg(2+) contacts are provided by Asn-202 and Asp-216. Substrate contacts are provided by residues Asn-267 and 324-326 (GIV).

It belongs to the succinate/malate CoA ligase beta subunit family. GTP-specific subunit beta subfamily. Heterodimer of an alpha and a beta subunit. The beta subunit determines specificity for GTP. Requires Mg(2+) as cofactor. In terms of tissue distribution, widely expressed. Not present in breast muscle.

Its subcellular location is the mitochondrion. It catalyses the reaction GTP + succinate + CoA = succinyl-CoA + GDP + phosphate. Its pathway is carbohydrate metabolism; tricarboxylic acid cycle; succinate from succinyl-CoA (ligase route): step 1/1. Functionally, GTP-specific succinyl-CoA synthetase functions in the citric acid cycle (TCA), coupling the hydrolysis of succinyl-CoA to the synthesis of GTP and thus represents the only step of substrate-level phosphorylation in the TCA. The beta subunit provides nucleotide specificity of the enzyme and binds the substrate succinate, while the binding sites for coenzyme A and phosphate are found in the alpha subunit. This is Succinate--CoA ligase [GDP-forming] subunit beta, mitochondrial from Columba livia (Rock dove).